The sequence spans 481 residues: Proline--tRNA ligase (481 aa).

It belongs to the class-II aminoacyl-tRNA synthetase family. ProS type 3 subfamily. In terms of assembly, homodimer.

Its subcellular location is the cytoplasm. It catalyses the reaction tRNA(Pro) + L-proline + ATP = L-prolyl-tRNA(Pro) + AMP + diphosphate. Functionally, catalyzes the attachment of proline to tRNA(Pro) in a two-step reaction: proline is first activated by ATP to form Pro-AMP and then transferred to the acceptor end of tRNA(Pro). The sequence is that of Proline--tRNA ligase from Thermococcus kodakarensis (strain ATCC BAA-918 / JCM 12380 / KOD1) (Pyrococcus kodakaraensis (strain KOD1)).